A 508-amino-acid polypeptide reads, in one-letter code: Photosystem II CP47 reaction center protein (508 aa).

6 consecutive transmembrane segments (helical) span residues 21–36 (AVHLMHTALVSGWAGS), 101–115 (ILLSGALFMAAIWHW), 140–156 (GIHLFLSGLLCFGFGAF), 203–218 (IAAGILGILAGLFHLS), 237–252 (VLSSSIAAVFWAAFVV), and 457–472 (WFALLFFFGHIWHGAR).

The protein belongs to the PsbB/PsbC family. PsbB subfamily. In terms of assembly, PSII is composed of 1 copy each of membrane proteins PsbA, PsbB, PsbC, PsbD, PsbE, PsbF, PsbH, PsbI, PsbJ, PsbK, PsbL, PsbM, PsbT, PsbX, PsbY, PsbZ, Psb30/Ycf12, at least 3 peripheral proteins of the oxygen-evolving complex and a large number of cofactors. It forms dimeric complexes. Binds multiple chlorophylls. PSII binds additional chlorophylls, carotenoids and specific lipids. serves as cofactor.

It is found in the plastid. The protein localises to the chloroplast thylakoid membrane. One of the components of the core complex of photosystem II (PSII). It binds chlorophyll and helps catalyze the primary light-induced photochemical processes of PSII. PSII is a light-driven water:plastoquinone oxidoreductase, using light energy to abstract electrons from H(2)O, generating O(2) and a proton gradient subsequently used for ATP formation. This is Photosystem II CP47 reaction center protein from Nephroselmis olivacea (Green alga).